A 232-amino-acid chain; its full sequence is Large ribosomal subunit protein uL1 (232 aa).

It belongs to the universal ribosomal protein uL1 family. Part of the 50S ribosomal subunit.

In terms of biological role, binds directly to 23S rRNA. The L1 stalk is quite mobile in the ribosome, and is involved in E site tRNA release. Its function is as follows. Protein L1 is also a translational repressor protein, it controls the translation of the L11 operon by binding to its mRNA. The chain is Large ribosomal subunit protein uL1 from Azobacteroides pseudotrichonymphae genomovar. CFP2.